An 819-amino-acid polypeptide reads, in one-letter code: Meiotically up-regulated gene 45 protein (819 aa).

The chain crosses the membrane as a helical span at residues 797–817; that stretch reads AMCLLTLLIGIYLILQVVFIY.

The protein resides in the membrane. In terms of biological role, has a role in meiosis. This Schizosaccharomyces pombe (strain 972 / ATCC 24843) (Fission yeast) protein is Meiotically up-regulated gene 45 protein (mug45).